The sequence spans 502 residues: 1-aminocyclopropane-1-carboxylate synthase-like protein 1 (502 aa).

Positions 1 to 24 (MFCLPQQESTAPTTCTGSASTQDM) are disordered. Glu106 is a binding site for substrate. Lys324 carries the N6-(pyridoxal phosphate)lysine modification.

This sequence belongs to the class-I pyridoxal-phosphate-dependent aminotransferase family.

In terms of biological role, does not catalyze the synthesis of 1-aminocyclopropane-1-carboxylate but is capable of catalyzing the deamination of L-vinylglycine. This Mus musculus (Mouse) protein is 1-aminocyclopropane-1-carboxylate synthase-like protein 1 (Accs).